Consider the following 378-residue polypeptide: Chaperone protein DnaJ (378 aa).

The 65-residue stretch at 5-69 folds into the J domain; sequence EYYDRLGVSK…QKRAAYDQYG (65 aa). The segment at 134-216 adopts a CR-type zinc-finger fold; it reads GVEKEVSYNR…CHGTGHEKQA (83 aa). The Zn(2+) site is built by cysteine 147, cysteine 150, cysteine 164, cysteine 167, cysteine 190, cysteine 193, cysteine 204, and cysteine 207. 4 CXXCXGXG motif repeats span residues 147–154, 164–171, 190–197, and 204–211; these read CGTCLGSG, CRKCHGSG, CDICHGSG, and CQTCHGTG.

Belongs to the DnaJ family. In terms of assembly, homodimer. It depends on Zn(2+) as a cofactor.

It is found in the cytoplasm. Its function is as follows. Participates actively in the response to hyperosmotic and heat shock by preventing the aggregation of stress-denatured proteins and by disaggregating proteins, also in an autonomous, DnaK-independent fashion. Unfolded proteins bind initially to DnaJ; upon interaction with the DnaJ-bound protein, DnaK hydrolyzes its bound ATP, resulting in the formation of a stable complex. GrpE releases ADP from DnaK; ATP binding to DnaK triggers the release of the substrate protein, thus completing the reaction cycle. Several rounds of ATP-dependent interactions between DnaJ, DnaK and GrpE are required for fully efficient folding. Also involved, together with DnaK and GrpE, in the DNA replication of plasmids through activation of initiation proteins. This Streptococcus pyogenes serotype M1 protein is Chaperone protein DnaJ.